The primary structure comprises 519 residues: Glucoamylase GLA1 (519 aa).

The signal sequence occupies residues 1 to 27; it reads MRFGVLISVFVAIVSALPLQEGPLNKR. N115 and N127 each carry an N-linked (GlcNAc...) asparagine glycan. W166 contacts substrate. N205 carries N-linked (GlcNAc...) asparagine glycosylation. D234 serves as the catalytic Proton acceptor. E237 functions as the Proton donor in the catalytic mechanism.

It belongs to the glycosyl hydrolase 15 family.

The catalysed reaction is Hydrolysis of terminal (1-&gt;4)-linked alpha-D-glucose residues successively from non-reducing ends of the chains with release of beta-D-glucose.. This is Glucoamylase GLA1 (GLA1) from Saccharomycopsis fibuligera (Yeast).